Here is a 793-residue protein sequence, read N- to C-terminus: Sucrose synthase (793 aa).

Residues 263–742 (MISRILIVSI…ALARVAERYT (480 aa)) are GT-B glycosyltransferase.

It belongs to the glycosyltransferase 1 family. In terms of assembly, homotetramer.

It catalyses the reaction an NDP-alpha-D-glucose + D-fructose = a ribonucleoside 5'-diphosphate + sucrose + H(+). It carries out the reaction ADP-alpha-D-glucose + D-fructose = sucrose + ADP + H(+). In terms of biological role, catalyzes the reversible conversion of sucrose and a nucleotide disphosphate (NDP) into fructose and NDP-glucose; although the reaction is freely reversible in vitro, the physiological reaction seems to be sucrose cleavage. Unlike characterized plant enzymes prefers ADP as a cosubstrate, whereas plants prefer UDP. The KM for sucrose is 45-fold lower in the presence of ADP than UDP. Its preference for ADP over UDP suggests it may directly link sucrose and glycogen metabolism. The protein is Sucrose synthase of Acidithiobacillus caldus (strain ATCC 51756 / DSM 8584 / KU).